A 250-amino-acid polypeptide reads, in one-letter code: MANIHIVIPARLKSTRLPNKMLADIAGKPMIQRVYEQVTKSKFDSIIIATDSQKIKDIAKSFGAKVVLTRDDHQSGTDRIAEAVTKLGFADEDIVVNVQGDEPLIPIENIEQAAQLLIDKSEAVVSTLCEKITDVEDIYNPNNVKVVFDKNNYALYFSRASIPFERGFSEKEQINISEFFRHIGIYAYRVAFLKHYAELTVSPIEKYEALEQLKVLYNGYKIAIEQSAKSTPAGVDTLQDLEKVRKLFNV.

It belongs to the KdsB family.

The protein localises to the cytoplasm. The enzyme catalyses 3-deoxy-alpha-D-manno-oct-2-ulosonate + CTP = CMP-3-deoxy-beta-D-manno-octulosonate + diphosphate. Its pathway is nucleotide-sugar biosynthesis; CMP-3-deoxy-D-manno-octulosonate biosynthesis; CMP-3-deoxy-D-manno-octulosonate from 3-deoxy-D-manno-octulosonate and CTP: step 1/1. It functions in the pathway bacterial outer membrane biogenesis; lipopolysaccharide biosynthesis. Its function is as follows. Activates KDO (a required 8-carbon sugar) for incorporation into bacterial lipopolysaccharide in Gram-negative bacteria. The protein is 3-deoxy-manno-octulosonate cytidylyltransferase of Francisella tularensis subsp. tularensis (strain FSC 198).